A 735-amino-acid polypeptide reads, in one-letter code: Funoran endo-beta-hydrolase (735 aa).

A signal peptide spans 1 to 27 (MRVKSVYKKLSVSFILVMLSASQEVNS). Glu-200 functions as the Proton donor in the catalytic mechanism. The Nucleophile role is filled by Glu-322.

Belongs to the glycosyl hydrolase 86 family.

The enzyme catalyses Endohydrolysis of beta-(1-&gt;4)-linkages between beta-D-galactopyranose-6-sulfate and 3,6-anhydro-alpha-L-galactopyranose units in funoran.. It carries out the reaction Hydrolysis of (1-&gt;4)-beta-D-galactosidic linkages in agarose, giving the tetramer as the predominant product.. Its activity is regulated as follows. Agarase activity is enhanced in the presence of NaCl. Agarase activity is significantly inhibited by Zn(2+) and slightly activated by several divalent ions including Mg(2+), Cd(2+) and Ca(2+). Endohydrolase that cleaves the beta-1,4 glycosidic bond between beta-D-galactopyranose-6-sulfate (G6S) and 3,6-anhydro-alpha-L-galactopyranose (LA) unit of funoran, a polysaccharide produced by red algae of the genus Gloiopeltis. It releases the disaccharide LA-G6S as the predominant end product. Also acts as a random endo-acting beta-agarase, which can hydrolyze agarose tetrasaccharides and hexasaccharides, and produces disaccharides as smallest products. Besides typical agarose oligosaccharides, it can use methylated galactoses. The enzyme exhibits higher catalytic efficiency towards agarose, but binds funoran preferentially. Has no activity on porphyran. This Wenyingzhuangia aestuarii protein is Funoran endo-beta-hydrolase.